We begin with the raw amino-acid sequence, 205 residues long: Methylthioribulose-1-phosphate dehydratase (205 aa).

Residues histidine 96 and histidine 98 each contribute to the Zn(2+) site.

It belongs to the aldolase class II family. MtnB subfamily. Zn(2+) is required as a cofactor.

It catalyses the reaction 5-(methylsulfanyl)-D-ribulose 1-phosphate = 5-methylsulfanyl-2,3-dioxopentyl phosphate + H2O. It functions in the pathway amino-acid biosynthesis; L-methionine biosynthesis via salvage pathway; L-methionine from S-methyl-5-thio-alpha-D-ribose 1-phosphate: step 2/6. Functionally, catalyzes the dehydration of methylthioribulose-1-phosphate (MTRu-1-P) into 2,3-diketo-5-methylthiopentyl-1-phosphate (DK-MTP-1-P). The chain is Methylthioribulose-1-phosphate dehydratase from Pseudomonas paraeruginosa (strain DSM 24068 / PA7) (Pseudomonas aeruginosa (strain PA7)).